The primary structure comprises 287 residues: 4-hydroxybenzoate octaprenyltransferase (287 aa).

6 helical membrane passes run 41-61 (WPLL…GCAM), 89-109 (WEAI…ILPL), 133-153 (FFAI…PMAF), 158-178 (DTVP…SVAY), 202-224 (FGRF…YVWI), and 267-287 (NNWL…LAGS).

This sequence belongs to the UbiA prenyltransferase family. It depends on Mg(2+) as a cofactor.

It is found in the cell inner membrane. The enzyme catalyses all-trans-octaprenyl diphosphate + 4-hydroxybenzoate = 4-hydroxy-3-(all-trans-octaprenyl)benzoate + diphosphate. It functions in the pathway cofactor biosynthesis; ubiquinone biosynthesis. Its function is as follows. Catalyzes the prenylation of para-hydroxybenzoate (PHB) with an all-trans polyprenyl group. Mediates the second step in the final reaction sequence of ubiquinone-8 (UQ-8) biosynthesis, which is the condensation of the polyisoprenoid side chain with PHB, generating the first membrane-bound Q intermediate 3-octaprenyl-4-hydroxybenzoate. The polypeptide is 4-hydroxybenzoate octaprenyltransferase (Burkholderia lata (strain ATCC 17760 / DSM 23089 / LMG 22485 / NCIMB 9086 / R18194 / 383)).